The following is a 64-amino-acid chain: Conotoxin Mr3.5 (64 aa).

The N-terminal stretch at 1 to 19 (MSKLGVLLTICLLLFPLTA) is a signal peptide. A propeptide spanning residues 20 to 46 (LPLDGDQPADQRAERTQAEKHSLPDPR) is cleaved from the precursor. Intrachain disulfides connect cysteine 49–cysteine 58, cysteine 50–cysteine 62, and cysteine 54–cysteine 63. Cysteine 63 bears the Cysteine amide mark.

This sequence belongs to the conotoxin M superfamily. As to expression, expressed by the venom duct.

Its subcellular location is the secreted. This Conus marmoreus (Marble cone) protein is Conotoxin Mr3.5.